The sequence spans 282 residues: tRNA uridine(34) hydroxylase (282 aa).

In terms of domain architecture, Rhodanese spans D128–Y222. C182 functions as the Cysteine persulfide intermediate in the catalytic mechanism.

It belongs to the TrhO family.

The catalysed reaction is uridine(34) in tRNA + AH2 + O2 = 5-hydroxyuridine(34) in tRNA + A + H2O. Its function is as follows. Catalyzes oxygen-dependent 5-hydroxyuridine (ho5U) modification at position 34 in tRNAs. The chain is tRNA uridine(34) hydroxylase from Ralstonia nicotianae (strain ATCC BAA-1114 / GMI1000) (Ralstonia solanacearum).